We begin with the raw amino-acid sequence, 289 residues long: Thymidylate synthase (289 aa).

DUMP contacts are provided by residues R21 and 150 to 151; that span reads RR. Catalysis depends on C170, which acts as the Nucleophile. DUMP-binding positions include 191–194, N202, and 232–234; these read RSGD and HIY. A (6R)-5,10-methylene-5,6,7,8-tetrahydrofolate-binding site is contributed by D194. A288 lines the (6R)-5,10-methylene-5,6,7,8-tetrahydrofolate pocket.

This sequence belongs to the thymidylate synthase family. Bacterial-type ThyA subfamily. In terms of assembly, homodimer.

The protein resides in the cytoplasm. It carries out the reaction dUMP + (6R)-5,10-methylene-5,6,7,8-tetrahydrofolate = 7,8-dihydrofolate + dTMP. The protein operates within pyrimidine metabolism; dTTP biosynthesis. Its function is as follows. Catalyzes the reductive methylation of 2'-deoxyuridine-5'-monophosphate (dUMP) to 2'-deoxythymidine-5'-monophosphate (dTMP) while utilizing 5,10-methylenetetrahydrofolate (mTHF) as the methyl donor and reductant in the reaction, yielding dihydrofolate (DHF) as a by-product. This enzymatic reaction provides an intracellular de novo source of dTMP, an essential precursor for DNA biosynthesis. The polypeptide is Thymidylate synthase (Mycoplasmopsis synoviae (strain 53) (Mycoplasma synoviae)).